A 722-amino-acid chain; its full sequence is MAR-binding filament-like protein 1-1 (722 aa).

Positions 1–20 (MGSSCFPQSPLSHSLFSSSS) are disordered. The transit peptide at 1–50 (MGSSCFPQSPLSHSLFSSSSLSSSQFTPLLFSPRNAQKCKKKMPAMACIH) directs the protein to the chloroplast. Residues 51 to 84 (SENQKESEFCSRRTILFVGFSVLPLLSLRANAFE) constitute a thylakoid transit peptide. At 85 to 112 (GLSVDSQVKAQPQKEETEQTIQGNAENP) the chain is on the lumenal, thylakoid side. The helical transmembrane segment at 113 to 133 (FFSLLNGLGVFGSGVLGSLYA) threads the bilayer. Residues 134 to 722 (LARNEKAVSD…TQPASQQESS (589 aa)) are Stromal-facing. Residues 146–679 (IESMKNKLKE…KGEILRLRTQ (534 aa)) are a coiled coil. Residues 687–722 (VNNEEKVEAGEKAAVTVKRTRRRKTATQPASQQESS) form a disordered region. Positions 705-712 (RTRRRKTA) match the Nuclear localization signal motif.

In terms of assembly, interacts with PTST2; the interaction is essential for the initiation of starch granules biosynthesis in leaf chloroplasts, for the correct location of the process in the stromal spaces between the thylakoid membranes, and for the association of PTST2 with the thylakoid membranes. In terms of processing, predicted to be translocated into the thylakoid by the Tat system.

It localises to the plastid. The protein localises to the chloroplast. It is found in the chloroplast thylakoid membrane. Its subcellular location is the chloroplast stroma. The protein resides in the chloroplast nucleoid. It localises to the nucleus. The protein localises to the nucleus matrix. Its function is as follows. Required for the initiation of starch granules biosynthesis in leaf chloroplasts. Anchored to the thylakoid membranes with its C-terminus facing into the stroma where it is essential for localizing PTST2 and SS4 to the stromal spaces between the thylakoid membranes in order to begin starch granule formation. Associated with leaf chloroplastic nucleoids in vivo. Binds to various chloroplastic double-stranded DNA fragments without particular sequence specificity in vitro. May function at the interface between nucleoids and thylakoids possibly by anchoring nucleoids to the thylakoid membrane system in mature chloroplasts. Likely to participate in nuclear architecture by connecting chromatin with the nuclear matrix and potentially with the nuclear envelope. This Nicotiana tabacum (Common tobacco) protein is MAR-binding filament-like protein 1-1.